Reading from the N-terminus, the 142-residue chain is Lutropin subunit beta (142 aa).

The signal sequence occupies residues 1–21 (MEMLQGLLLLWLLLNVGGVWT). 6 disulfides stabilise this stretch: C30–C78, C44–C93, C47–C131, C55–C109, C59–C111, and C114–C121. N34 carries an N-linked (GlcNAc...) asparagine glycan.

Belongs to the glycoprotein hormones subunit beta family. In terms of assembly, heterodimer of a common alpha chain and a unique beta chain which confers biological specificity to thyrotropin, lutropin, follitropin and gonadotropin.

It is found in the secreted. In terms of biological role, promotes spermatogenesis and ovulation by stimulating the testes and ovaries to synthesize steroids. This is Lutropin subunit beta (LHB) from Panthera tigris altaica (Siberian tiger).